We begin with the raw amino-acid sequence, 480 residues long: Protein nucleotidyltransferase YdiU (480 aa).

8 residues coordinate ATP: G84, G86, R87, K107, D119, G120, R170, and R177. The active-site Proton acceptor is D246. Mg(2+)-binding residues include N247 and D256. D256 contacts ATP.

The protein belongs to the SELO family. It depends on Mg(2+) as a cofactor. Requires Mn(2+) as cofactor.

The catalysed reaction is L-seryl-[protein] + ATP = 3-O-(5'-adenylyl)-L-seryl-[protein] + diphosphate. It carries out the reaction L-threonyl-[protein] + ATP = 3-O-(5'-adenylyl)-L-threonyl-[protein] + diphosphate. It catalyses the reaction L-tyrosyl-[protein] + ATP = O-(5'-adenylyl)-L-tyrosyl-[protein] + diphosphate. The enzyme catalyses L-histidyl-[protein] + UTP = N(tele)-(5'-uridylyl)-L-histidyl-[protein] + diphosphate. The catalysed reaction is L-seryl-[protein] + UTP = O-(5'-uridylyl)-L-seryl-[protein] + diphosphate. It carries out the reaction L-tyrosyl-[protein] + UTP = O-(5'-uridylyl)-L-tyrosyl-[protein] + diphosphate. Functionally, nucleotidyltransferase involved in the post-translational modification of proteins. It can catalyze the addition of adenosine monophosphate (AMP) or uridine monophosphate (UMP) to a protein, resulting in modifications known as AMPylation and UMPylation. The chain is Protein nucleotidyltransferase YdiU from Pseudoalteromonas atlantica (strain T6c / ATCC BAA-1087).